A 599-amino-acid chain; its full sequence is EASSVVNPENTFFSVKRFIGRKMTEVDEESKQVSYTVVRDENNNVKLECPAIGKQFAAEEISAQVLRKLVDDASKFLNDKVTKAVVTVPAYFNDSQRTATKDAGRIAGLEVLRIINEPTAASLAYGFEKKNNETILVFDLGGGTFDVSVLEVGDGVFEVLSTSGDTHLGGDDFDKRIVDWLASSFKRDEGIDLLKDKQALQRLTETAEKAKMELSSLTQANISLPFITATADGPKHIETTLTRAKFEELWSDLLDRLRTPVENSLRDAKLSFSDLDEVILVGGSTRIPAVIELVKKMTGKAPNVTVNPDEVVALGAAVQAGVLAGDVSDIVLLDVTPLSIGLETLGGVMTKIIPRNTTLPTSKSEVFSTAADGQTSVEINVLQGEREFVRDNKSLGSFRLDGIPPAPRGVPQVEVKFDIDANGILSVTAIDKGTGKKQDITITGASTLPGDEVERMVSEAEKFAKEDKEKREVIDTKNQADSVVYQTEKQLKELGEKVPVPVKEKVEAKLGELKDAINGGETQAIKDAMAALNQEVMQLGQSLYNQPGAGGEPGAAQAQHQEQSSARQIQRAKDPKEMLLMLTSQTASELVEEVVSKMH.

The segment at 545–573 (NQPGAGGEPGAAQAQHQEQSSARQIQRAK) is disordered. Over residues 554–568 (GAAQAQHQEQSSARQ) the composition is skewed to low complexity.

Belongs to the heat shock protein 70 family.

It is found in the plastid. The protein resides in the chloroplast stroma. In terms of biological role, interacts with newly imported chloroplast proteins to assist in their maturation. The chain is Stromal 70 kDa heat shock-related protein, chloroplastic (CHSP70) from Spinacia oleracea (Spinach).